Reading from the N-terminus, the 228-residue chain is U1 small nuclear ribonucleoprotein C (228 aa).

The Matrin-type zinc finger occupies 4–36 (YYCEYCDIYLTHSSPVGRRQHVQGRKHISAKIE). Residues 179 to 190 (LVKDNPNEERNG) are compositionally biased toward basic and acidic residues. Positions 179–228 (LVKDNPNEERNGDSAIANQPSTMHHEEDQDDPANATGGTANNNDNVSINA) are disordered. Positions 211–221 (ANATGGTANNN) are enriched in low complexity.

It belongs to the U1 small nuclear ribonucleoprotein C family. In terms of assembly, U1 snRNP is composed of the 7 core Sm proteins B/B', D1, D2, D3, E, F and G that assemble in a heptameric protein ring on the Sm site of the small nuclear RNA to form the core snRNP, and at least 3 U1 snRNP-specific proteins U1-70K, U1-A and U1-C. U1-C interacts with U1 snRNA and the 5' splice-site region of the pre-mRNA.

It localises to the nucleus. Its function is as follows. Component of the spliceosomal U1 snRNP, which is essential for recognition of the pre-mRNA 5' splice-site and the subsequent assembly of the spliceosome. U1-C is directly involved in initial 5' splice-site recognition for both constitutive and regulated alternative splicing. The interaction with the 5' splice-site seems to precede base-pairing between the pre-mRNA and the U1 snRNA. Stimulates commitment or early (E) complex formation by stabilizing the base pairing of the 5' end of the U1 snRNA and the 5' splice-site region. This chain is U1 small nuclear ribonucleoprotein C, found in Plasmodium knowlesi (strain H).